The chain runs to 203 residues: Outer-membrane lipoprotein carrier protein (203 aa).

The first 21 residues, 1-21, serve as a signal peptide directing secretion; the sequence is MKKMAIACALLSSVVASSVWA. Residues 178-203 are disordered; that stretch reads QQNGAVEPSKFTFTPPQGVTIDDQRK.

It belongs to the LolA family. Monomer.

Its subcellular location is the periplasm. Its function is as follows. Participates in the translocation of lipoproteins from the inner membrane to the outer membrane. Only forms a complex with a lipoprotein if the residue after the N-terminal Cys is not an aspartate (The Asp acts as a targeting signal to indicate that the lipoprotein should stay in the inner membrane). The polypeptide is Outer-membrane lipoprotein carrier protein (Salmonella typhi).